Consider the following 314-residue polypeptide: Peroxisome biogenesis factor 10 (314 aa).

Residues Met-1 to Glu-7 are Peroxisomal matrix-facing. A helical transmembrane segment spans residues Ile-8–Leu-37. A topological domain (cytoplasmic) is located at residue Gly-38. The helical transmembrane segment at Gln-39–Ser-60 threads the bilayer. Residues Thr-61 to Pro-90 lie on the Peroxisomal matrix side of the membrane. Residues Ser-91–Ile-110 traverse the membrane as a helical segment. The Cytoplasmic portion of the chain corresponds to Gln-111 to Asp-142. A helical transmembrane segment spans residues Val-143–Thr-166. Residues Gly-167–Arg-197 are Peroxisomal matrix-facing. Residues Phe-198–Phe-218 traverse the membrane as a helical segment. Over Leu-219 to Leu-314 the chain is Cytoplasmic. Residues Cys-255, Cys-258, Cys-269, His-271, Cys-274, Cys-277, Cys-296, and Cys-299 each contribute to the Zn(2+) site. The RING-type zinc-finger motif lies at Cys-255–Arg-300.

The protein belongs to the pex2/pex10/pex12 family. Component of the PEX2-PEX10-PEX12 retrotranslocation channel.

It is found in the peroxisome membrane. It catalyses the reaction S-ubiquitinyl-[E2 ubiquitin-conjugating enzyme]-L-cysteine + [acceptor protein]-L-lysine = [E2 ubiquitin-conjugating enzyme]-L-cysteine + N(6)-ubiquitinyl-[acceptor protein]-L-lysine.. It participates in protein modification; protein ubiquitination. Its activity is regulated as follows. The E3 ubiquitin-protein ligase activity is stimulated by PEX12/prx-12. Its function is as follows. E3 ubiquitin-protein ligase component of a retrotranslocation channel required for peroxisome organization by mediating export of the PEX5/prx-5 receptor from peroxisomes to the cytosol, thereby promoting PEX5/prx-5 recycling. The retrotranslocation channel is composed of PEX2/prx-2, PEX10/prx-10 and PEX12/prx-12; each subunit contributing transmembrane segments that coassemble into an open channel that specifically allows the passage of PEX5/prx-5 through the peroxisomal membrane. PEX10/prx-10 also regulates PEX5 recycling by acting as a E3 ubiquitin-protein ligase. When PEX5/prx-5 recycling is compromised, PEX10/prx-10 catalyzes polyubiquitination of PEX5/prx-5 during its passage through the retrotranslocation channel, leading to its degradation. The protein is Peroxisome biogenesis factor 10 of Caenorhabditis elegans.